Here is a 30-residue protein sequence, read N- to C-terminus: Kappa-sparatoxin-Hv1b (30 aa).

3 cysteine pairs are disulfide-bonded: Cys3–Cys17, Cys10–Cys22, and Cys16–Cys26. Trp30 carries the post-translational modification Tryptophan amide.

Belongs to the neurotoxin 10 (Hwtx-1) family. 19 (HpTX2) subfamily. Expressed by the venom gland.

It localises to the secreted. Functionally, inhibitor of voltage-gated potassium channels of the Kv4/KCND family. Inhibition of Kv4.3/KCND3 and Kv4.2/KCND2 is strongly voltage-dependent, while inhibition of Kv4.1/KCND1 shows less voltage-dependence. Its binding site may be near the potassium channel voltage sensor. Also blocks calcium channels. The polypeptide is Kappa-sparatoxin-Hv1b (Heteropoda venatoria (Brown huntsman spider)).